We begin with the raw amino-acid sequence, 460 residues long: Sorting nexin-4 (460 aa).

Positions 1–16 are enriched in polar residues; the sequence is MTATEQQQDDFSNVSW. The segment at 1–53 is disordered; that stretch reads MTATEQQQDDFSNVSWSEHVHDQQTRSVPDAEEPGHDMNAPGTGLERDAPSLG. The region spanning 56–178 is the PX domain; it reads KLECTVDTPI…TFLESPDWNA (123 aa). Coiled-coil stretches lie at residues 238–266, 306–337, and 374–403; these read EKVI…QKLI, RDMQ…EYLN, and QARR…TSDM.

This sequence belongs to the sorting nexin family. As to quaternary structure, forms a complex with ATG20 and ATG17.

It is found in the cytoplasm. It localises to the membrane. The protein localises to the endosome membrane. Its function is as follows. Sorting nexin involved in the separation or division of vacuoles throughout the entire life cycle of the cells. Involved in retrieval of late-Golgi SNAREs from post-Golgi endosomes to the trans-Golgi network, for cytoplasm to vacuole transport (Cvt), and autophagy of large cargos including mitophagy, pexophagy and glycophagy. Autophagy is required for proper vegetative growth, asexual/sexual reproduction, and full virulence. Autophagy is particularly involved in the biosynthesis of deoxynivalenol (DON), an important virulence determinant. The sequence is that of Sorting nexin-4 from Gibberella zeae (strain ATCC MYA-4620 / CBS 123657 / FGSC 9075 / NRRL 31084 / PH-1) (Wheat head blight fungus).